A 474-amino-acid chain; its full sequence is Pyruvate kinase (474 aa).

Arg-32 contacts substrate. K(+)-binding residues include Asn-34, Ser-36, and Asp-66. 34 to 37 is an ATP binding site; that stretch reads NFSH. Positions 73 and 155 each coordinate ATP. Glu-221 lines the Mg(2+) pocket. Residues Gly-244, Asp-245, and Thr-277 each coordinate substrate. Residue Asp-245 participates in Mg(2+) binding.

This sequence belongs to the pyruvate kinase family. As to quaternary structure, homotetramer. It depends on Mg(2+) as a cofactor. K(+) is required as a cofactor.

The catalysed reaction is pyruvate + ATP = phosphoenolpyruvate + ADP + H(+). It participates in carbohydrate degradation; glycolysis; pyruvate from D-glyceraldehyde 3-phosphate: step 5/5. The chain is Pyruvate kinase (pykF) from Clostridium perfringens (strain 13 / Type A).